Here is a 316-residue protein sequence, read N- to C-terminus: Beta-ketoacyl-[acyl-carrier-protein] synthase III 1 (316 aa).

Residues C112 and H243 contribute to the active site. Residues 244–248 (QANYR) form an ACP-binding region. N273 is a catalytic residue.

It belongs to the thiolase-like superfamily. FabH family. Homodimer.

It is found in the cytoplasm. It catalyses the reaction malonyl-[ACP] + acetyl-CoA + H(+) = 3-oxobutanoyl-[ACP] + CO2 + CoA. It functions in the pathway lipid metabolism; fatty acid biosynthesis. In terms of biological role, catalyzes the condensation reaction of fatty acid synthesis by the addition to an acyl acceptor of two carbons from malonyl-ACP. Catalyzes the first condensation reaction which initiates fatty acid synthesis and may therefore play a role in governing the total rate of fatty acid production. Possesses both acetoacetyl-ACP synthase and acetyl transacylase activities. Its substrate specificity determines the biosynthesis of branched-chain and/or straight-chain of fatty acids. This Vibrio parahaemolyticus serotype O3:K6 (strain RIMD 2210633) protein is Beta-ketoacyl-[acyl-carrier-protein] synthase III 1.